Consider the following 492-residue polypeptide: NADH-quinone oxidoreductase subunit N (492 aa).

14 helical membrane passes run 16-36, 44-64, 81-101, 111-131, 134-154, 168-188, 210-230, 244-264, 276-296, 306-326, 332-352, 382-402, 423-443, and 463-483; these read LLIP…VGVF, LYIT…FLEG, ISLL…LFFM, GAEF…MASS, LILI…LIAL, FIMG…LYAA, ILVF…VTLV, NALL…AVII, AFVE…PNLI, MLAY…LINT, VIFF…GILW, LAIL…FCVF, IMAI…IYIF, and FALS…QNLL.

The protein belongs to the complex I subunit 2 family. NDH-1 is composed of 14 different subunits. Subunits NuoA, H, J, K, L, M, N constitute the membrane sector of the complex.

It is found in the cell inner membrane. The catalysed reaction is a quinone + NADH + 5 H(+)(in) = a quinol + NAD(+) + 4 H(+)(out). Functionally, NDH-1 shuttles electrons from NADH, via FMN and iron-sulfur (Fe-S) centers, to quinones in the respiratory chain. The immediate electron acceptor for the enzyme in this species is believed to be ubiquinone. Couples the redox reaction to proton translocation (for every two electrons transferred, four hydrogen ions are translocated across the cytoplasmic membrane), and thus conserves the redox energy in a proton gradient. This chain is NADH-quinone oxidoreductase subunit N, found in Helicobacter hepaticus (strain ATCC 51449 / 3B1).